Reading from the N-terminus, the 694-residue chain is Elongation factor G 2 (694 aa).

The 276-residue stretch at 5–280 (SKYRNIGIFA…AVVDYLPSPT (276 aa)) folds into the tr-type G domain. GTP contacts are provided by residues 14-21 (AHVDAGKT), 78-82 (DTPGH), and 132-135 (NKLD).

Belongs to the TRAFAC class translation factor GTPase superfamily. Classic translation factor GTPase family. EF-G/EF-2 subfamily.

It localises to the cytoplasm. Catalyzes the GTP-dependent ribosomal translocation step during translation elongation. During this step, the ribosome changes from the pre-translocational (PRE) to the post-translocational (POST) state as the newly formed A-site-bound peptidyl-tRNA and P-site-bound deacylated tRNA move to the P and E sites, respectively. Catalyzes the coordinated movement of the two tRNA molecules, the mRNA and conformational changes in the ribosome. This chain is Elongation factor G 2, found in Pseudoalteromonas translucida (strain TAC 125).